A 109-amino-acid chain; its full sequence is uncharacterized protein (109 aa).

Positions 77–98 (TRTGHAYPRFTRPSFPSCNRNG) are disordered.

This is an uncharacterized protein from Homo sapiens (Human).